Consider the following 1017-residue polypeptide: Probable disease resistance protein RDL5 (1017 aa).

Residues 25–52 (QGVEDQVTELKRDLNMLSSFLKDANAKK) are a coiled coil. The 314-residue stretch at 147–460 (KQREMRQKFS…AEGIFQPRHY (314 aa)) folds into the NB-ARC domain. Residue 190–197 (GMGGLGKT) coordinates ATP. 7 LRR repeats span residues 602–627 (LIHL…NLKL), 649–674 (MQEL…NLVK), 675–699 (LETL…RLST), 768–791 (PSHL…ILEK), 792–819 (LLQL…GFPQ), 841–865 (MPLL…HLPS), and 937–962 (MPFL…QFIY).

This sequence belongs to the disease resistance NB-LRR family.

Its function is as follows. Potential disease resistance protein. This Arabidopsis thaliana (Mouse-ear cress) protein is Probable disease resistance protein RDL5 (RDL5).